Here is a 740-residue protein sequence, read N- to C-terminus: NAD(P)H-quinone oxidoreductase subunit 5, chloroplastic (740 aa).

16 helical membrane-spanning segments follow: residues 9-29 (WIIP…LFLF), 40-60 (WAFQ…YLSI), 89-109 (IDPL…MVLI), 125-145 (FAYM…SNLI), 147-167 (IYIF…FWFT), 185-205 (GDFG…SFEF), 219-239 (NEVD…GAVA), 258-278 (TPIS…FLVA), 286-306 (VIPY…LLGA), 327-347 (LGYM…FHLI), 354-374 (ALLF…VGYS), 396-416 (ITFL…CFWS), 425-445 (WLYS…TAFY), 543-563 (LFPI…GIPF), 602-622 (VLSV…YKPI), and 717-737 (SYLF…YLLF).

It belongs to the complex I subunit 5 family. As to quaternary structure, NDH is composed of at least 16 different subunits, 5 of which are encoded in the nucleus.

It is found in the plastid. The protein resides in the chloroplast thylakoid membrane. It catalyses the reaction a plastoquinone + NADH + (n+1) H(+)(in) = a plastoquinol + NAD(+) + n H(+)(out). The enzyme catalyses a plastoquinone + NADPH + (n+1) H(+)(in) = a plastoquinol + NADP(+) + n H(+)(out). Its function is as follows. NDH shuttles electrons from NAD(P)H:plastoquinone, via FMN and iron-sulfur (Fe-S) centers, to quinones in the photosynthetic chain and possibly in a chloroplast respiratory chain. The immediate electron acceptor for the enzyme in this species is believed to be plastoquinone. Couples the redox reaction to proton translocation, and thus conserves the redox energy in a proton gradient. The polypeptide is NAD(P)H-quinone oxidoreductase subunit 5, chloroplastic (ndhF) (Nicotiana tabacum (Common tobacco)).